Reading from the N-terminus, the 261-residue chain is Undecaprenyl-diphosphatase (261 aa).

Helical transmembrane passes span 1–21, 40–60, 79–99, 106–126, 140–160, 185–205, 210–230, and 239–259; these read MTVL…FLPI, GLTF…AYFW, GRLF…GVLF, IFRS…GLWW, VNLF…IPGV, FLMS…ELPL, LAFI…IKFL, and YLLF…VFWL.

The protein belongs to the UppP family.

The protein resides in the cell membrane. It catalyses the reaction di-trans,octa-cis-undecaprenyl diphosphate + H2O = di-trans,octa-cis-undecaprenyl phosphate + phosphate + H(+). Its function is as follows. Catalyzes the dephosphorylation of undecaprenyl diphosphate (UPP). Confers resistance to bacitracin. The protein is Undecaprenyl-diphosphatase of Moorella thermoacetica (strain ATCC 39073 / JCM 9320).